We begin with the raw amino-acid sequence, 115 residues long: Succinate dehydrogenase assembly factor 3, mitochondrial (115 aa).

It belongs to the complex I LYR family. SDHAF3 subfamily. As to quaternary structure, interacts with sdh2 within an sdh1-sdh2 subcomplex.

The protein localises to the mitochondrion matrix. Functionally, plays an essential role in the assembly of succinate dehydrogenase (SDH), an enzyme complex (also referred to as respiratory complex II) that is a component of both the tricarboxylic acid (TCA) cycle and the mitochondrial electron transport chain, and which couples the oxidation of succinate to fumarate with the reduction of ubiquinone (coenzyme Q) to ubiquinol. Promotes maturation of the iron-sulfur protein subunit sdh2 of the SDH catalytic dimer, protecting it from the deleterious effects of oxidants. May act together with SDHAF1. In Schizosaccharomyces pombe (strain 972 / ATCC 24843) (Fission yeast), this protein is Succinate dehydrogenase assembly factor 3, mitochondrial.